A 160-amino-acid chain; its full sequence is Ribosome maturation factor RimP (160 aa).

Belongs to the RimP family.

The protein resides in the cytoplasm. Functionally, required for maturation of 30S ribosomal subunits. This chain is Ribosome maturation factor RimP, found in Geobacter sp. (strain M21).